A 552-amino-acid polypeptide reads, in one-letter code: Glucose-6-phosphate isomerase (552 aa).

The active-site Proton donor is Glu-357. Active-site residues include His-388 and Lys-516. The segment at 525–552 is disordered; sequence ELASTKPPKHDSSTNALIERYRTRGCRS.

Belongs to the GPI family.

It is found in the cytoplasm. The catalysed reaction is alpha-D-glucose 6-phosphate = beta-D-fructose 6-phosphate. It functions in the pathway carbohydrate biosynthesis; gluconeogenesis. The protein operates within carbohydrate degradation; glycolysis; D-glyceraldehyde 3-phosphate and glycerone phosphate from D-glucose: step 2/4. Functionally, catalyzes the reversible isomerization of glucose-6-phosphate to fructose-6-phosphate. This Laribacter hongkongensis (strain HLHK9) protein is Glucose-6-phosphate isomerase.